The primary structure comprises 202 residues: Ras-related protein Rab-18 (202 aa).

12 residues coordinate GTP: S20, G23, K24, S25, S26, D37, P38, T43, G69, K126, D128, and A155. An Effector region motif is present at residues 40 to 48 (QAATIGVDF). Residues 183-202 (RPTFRLGQPTDTSSGNLCGC) form a disordered region. Residues 191 to 202 (PTDTSSGNLCGC) are compositionally biased toward polar residues. S-geranylgeranyl cysteine attachment occurs at residues C200 and C202. C202 bears the Cysteine methyl ester mark.

Belongs to the small GTPase superfamily. Rab family.

It catalyses the reaction GTP + H2O = GDP + phosphate + H(+). The small GTPases Rab are key regulators of intracellular membrane trafficking, from the formation of transport vesicles to their fusion with membranes. Rabs cycle between an inactive GDP-bound form and an active GTP-bound form that is able to recruit to membranes different sets of downstream effectors directly responsible for vesicle formation, movement, tethering and fusion. Plays a role in apical endocytosis/recycling. May be implicated in transport between the plasma membrane and early endosomes. This chain is Ras-related protein Rab-18 (rab-18), found in Caenorhabditis briggsae.